A 369-amino-acid chain; its full sequence is Transforming protein Maf (369 aa).

2 disordered regions span residues serine 57–lysine 85 and glycine 169–phenylalanine 243. A compositionally biased stretch (basic residues) spans histidine 173–histidine 183. Over residues glycine 184–proline 193 the composition is skewed to gly residues. Residues histidine 194–alanine 211 show a composition bias toward low complexity. Over residues glycine 212 to glycine 226 the composition is skewed to gly residues. A basic motif region spans residues arginine 274–arginine 299. In terms of domain architecture, bZIP spans arginine 274–leucine 337. The tract at residues leucine 302–leucine 323 is leucine-zipper. Positions glycine 341–methionine 369 are disordered. Over residues asparagine 345–serine 354 the composition is skewed to polar residues.

Belongs to the bZIP family. Maf subfamily.

It localises to the host nucleus. Its function is as follows. Might be a transcriptional trans-activator. The sequence is that of Transforming protein Maf (V-MAF) from Galliformes.